Reading from the N-terminus, the 152-residue chain is Prefoldin subunit alpha (152 aa).

The disordered stretch occupies residues 110–152 (ETQEEVDELESESQELEQQAQQMQQQMQQQQMQQMQQSQGDEE). Positions 111-124 (TQEEVDELESESQE) are enriched in acidic residues. Residues 125–152 (LEQQAQQMQQQMQQQQMQQMQQSQGDEE) show a composition bias toward low complexity.

Belongs to the prefoldin alpha subunit family. In terms of assembly, heterohexamer of two alpha and four beta subunits.

It is found in the cytoplasm. Molecular chaperone capable of stabilizing a range of proteins. Seems to fulfill an ATP-independent, HSP70-like function in archaeal de novo protein folding. This Halorubrum lacusprofundi (strain ATCC 49239 / DSM 5036 / JCM 8891 / ACAM 34) protein is Prefoldin subunit alpha.